The chain runs to 139 residues: uncharacterized protein (139 aa).

This is an uncharacterized protein from Encephalitozoon cuniculi (strain GB-M1) (Microsporidian parasite).